Here is a 721-residue protein sequence, read N- to C-terminus: Polyribonucleotide nucleotidyltransferase (721 aa).

Residues aspartate 495 and aspartate 501 each coordinate Mg(2+). Residues 562 to 621 (PRITTIKIRPERIKDIIGPGGKTIKDITARTGTSINIEDDGSVSIASPNQDKVEEAIKMI) form the KH domain. Residues 631–699 (GRIYLGTVRK…RSGKIRLSRK (69 aa)) form the S1 motif domain. The interval 699 to 721 (KEALADSAKKSEGTEPPKGEPAK) is disordered.

It belongs to the polyribonucleotide nucleotidyltransferase family. It depends on Mg(2+) as a cofactor.

It is found in the cytoplasm. It carries out the reaction RNA(n+1) + phosphate = RNA(n) + a ribonucleoside 5'-diphosphate. In terms of biological role, involved in mRNA degradation. Catalyzes the phosphorolysis of single-stranded polyribonucleotides processively in the 3'- to 5'-direction. This Anaeromyxobacter dehalogenans (strain 2CP-1 / ATCC BAA-258) protein is Polyribonucleotide nucleotidyltransferase.